A 985-amino-acid chain; its full sequence is MAASVAAAARRLRRAIRRSPAWRGLSHRPLSSEPPAAKASAVRAAFLNFFRDRHGHRLVPSASVRPRGDPSLLFVNAGMNQFKPIFLGTVDPRSEMAGFRRVANSQKCVRAGGHHNDLEDVGRDLSHHTFFEMLGNWAFGGEYFKEEACNMAWELLTQVYGIPEERLWISYFDGDPKAGLDPDLETRDIWLSLGVPASRVLSFGPQENFWEMGDTGPCGPCTEIHYDLAGGVGAPQLVELWNLVFMQHNREADGSLQPLPQRHVDTGMGLERLVAVLQGKHSTYDTDLFSPLLNAIQQGCRAPPYLGRVGVADEGRTDTAYRVVADHIRTLSVCISDGIFPGMSGPPLVLRRILRRAVRFSMEILKAPPGFLGSLVPVVVETLGDAYPELQRNSAQIANLVSEDEAAFLASLERGRRIIDRTLRTLGPSDMFPAEVAWSLSLCGDLGLPLDMVELMLEEKGVQLDSAGLERLAQEEAQHRARQAEPVQKQGLWLDVHALGELQRQGVPPTDDSPKYNYSLRPSGSYEFGTCEAQVLQLYTEDGTAVASVGKGQRCGLLLDRTNFYAEQGGQASDRGYLVRAGQEDVLFPVARAQVCGGFILHEAVAPECLRLGDQVQLHVDEAWRLGCMAKHTATHLLNWALRQTLGPGTEQQGSHLNPEQLRLDVTTQTPLTPEQLRAVENTVQEAVGQDEAVYMEEVPLALTAQVPGLRSLDEVYPDPVRVVSVGVPVAHALDPASQAALQTSVELCCGTHLLRTGAVGDLVIIGDRQLSKGTTRLLAVTGEQAQQARELGQSLAQEVKAATERLSLGSRDVAEALRLSKDIGRLIEAVETAVMPQWQRRELLATVKMLQRRANTAIRKLQMGQAAKKTQELLERHSKGPLIVDTVSAESLSVLVKVVRQLCEQAPSTSVLLLSPQPMGKVLCACQVAQGAMPTFTAEAWALAVCSHMGGKAWGSRVVAQGTGSTTDLEAALSIAQTYALSQL.

A mitochondrion-targeting transit peptide spans 1–23; sequence MAASVAAAARRLRRAIRRSPAWR. ATP-binding positions include arginine 110, histidine 128, tryptophan 210, and 240–242; that span reads LWN. L-alanine is bound by residues asparagine 242 and aspartate 265. Glycine 269 serves as a coordination point for ATP. Residues histidine 632, histidine 636, cysteine 749, and histidine 753 each coordinate Zn(2+).

Belongs to the class-II aminoacyl-tRNA synthetase family. Monomer. Zn(2+) is required as a cofactor.

It is found in the mitochondrion. The enzyme catalyses tRNA(Ala) + L-alanine + ATP = L-alanyl-tRNA(Ala) + AMP + diphosphate. The catalysed reaction is (S)-lactate + ATP + H(+) = (S)-lactoyl-AMP + diphosphate. It carries out the reaction (S)-lactoyl-AMP + L-lysyl-[protein] = N(6)-[(S)-lactoyl]-L-lysyl-[protein] + AMP + 2 H(+). Catalyzes the attachment of alanine to tRNA(Ala) in a two-step reaction: alanine is first activated by ATP to form Ala-AMP and then transferred to the acceptor end of tRNA(Ala). Also edits incorrectly charged tRNA(Ala) via its editing domain. In presence of high levels of lactate, also acts as a protein lactyltransferase that mediates lactylation of lysine residues in target proteins, such as CGAS. Acts as an inhibitor of cGAS/STING signaling by catalyzing lactylation of CGAS, preventing the formation of liquid-like droplets in which CGAS is activated. This chain is Alanine--tRNA ligase, mitochondrial, found in Homo sapiens (Human).